The following is a 122-amino-acid chain: Large ribosomal subunit protein uL14 (122 aa).

This sequence belongs to the universal ribosomal protein uL14 family. Part of the 50S ribosomal subunit. Forms a cluster with proteins L3 and L19. In the 70S ribosome, L14 and L19 interact and together make contacts with the 16S rRNA in bridges B5 and B8.

In terms of biological role, binds to 23S rRNA. Forms part of two intersubunit bridges in the 70S ribosome. This Ruminiclostridium cellulolyticum (strain ATCC 35319 / DSM 5812 / JCM 6584 / H10) (Clostridium cellulolyticum) protein is Large ribosomal subunit protein uL14.